A 102-amino-acid polypeptide reads, in one-letter code: Aspartyl/glutamyl-tRNA(Asn/Gln) amidotransferase subunit C (102 aa).

This sequence belongs to the GatC family. As to quaternary structure, heterotrimer of A, B and C subunits.

The catalysed reaction is L-glutamyl-tRNA(Gln) + L-glutamine + ATP + H2O = L-glutaminyl-tRNA(Gln) + L-glutamate + ADP + phosphate + H(+). The enzyme catalyses L-aspartyl-tRNA(Asn) + L-glutamine + ATP + H2O = L-asparaginyl-tRNA(Asn) + L-glutamate + ADP + phosphate + 2 H(+). In terms of biological role, allows the formation of correctly charged Asn-tRNA(Asn) or Gln-tRNA(Gln) through the transamidation of misacylated Asp-tRNA(Asn) or Glu-tRNA(Gln) in organisms which lack either or both of asparaginyl-tRNA or glutaminyl-tRNA synthetases. The reaction takes place in the presence of glutamine and ATP through an activated phospho-Asp-tRNA(Asn) or phospho-Glu-tRNA(Gln). The chain is Aspartyl/glutamyl-tRNA(Asn/Gln) amidotransferase subunit C from Bordetella bronchiseptica (strain ATCC BAA-588 / NCTC 13252 / RB50) (Alcaligenes bronchisepticus).